Reading from the N-terminus, the 471-residue chain is tRNA modification GTPase MnmE (471 aa).

Arg-26, Glu-83, and Lys-136 together coordinate (6S)-5-formyl-5,6,7,8-tetrahydrofolate. The TrmE-type G domain maps to 232-393 (GLRVVLAGQP…LRRRLLQLAG (162 aa)). A K(+)-binding site is contributed by Asn-242. GTP-binding positions include 242 to 247 (NVGKSS), 261 to 267 (TPIAGTT), 286 to 289 (DTAG), 354 to 357 (NKAD), and 374 to 376 (SAR). Ser-246 is a binding site for Mg(2+). Residues Thr-261, Ile-263, and Thr-266 each coordinate K(+). Residue Thr-267 coordinates Mg(2+). Lys-471 is a (6S)-5-formyl-5,6,7,8-tetrahydrofolate binding site.

This sequence belongs to the TRAFAC class TrmE-Era-EngA-EngB-Septin-like GTPase superfamily. TrmE GTPase family. As to quaternary structure, homodimer. Heterotetramer of two MnmE and two MnmG subunits. It depends on K(+) as a cofactor.

The protein localises to the cytoplasm. Its function is as follows. Exhibits a very high intrinsic GTPase hydrolysis rate. Involved in the addition of a carboxymethylaminomethyl (cmnm) group at the wobble position (U34) of certain tRNAs, forming tRNA-cmnm(5)s(2)U34. The sequence is that of tRNA modification GTPase MnmE from Methylibium petroleiphilum (strain ATCC BAA-1232 / LMG 22953 / PM1).